Consider the following 189-residue polypeptide: Elongation factor P-like protein (189 aa).

Belongs to the elongation factor P family.

This chain is Elongation factor P-like protein, found in Vibrio atlanticus (strain LGP32) (Vibrio splendidus (strain Mel32)).